We begin with the raw amino-acid sequence, 287 residues long: MSQSRAPAREPSETPSQREQIRSHMKMVIQQLEGILKELKDVAHELREVVGQIDKLTSDLELDLDADDWTVATASSTSSSERGLCEAFRLDFLGQDSLSDSWDFCSFLESSSRRSARDDTKPPPTTASVYSQMNGGLPVPNGPLIITPDSSSEEASSSTHSQSQKTSRTAGTRERVRFSDKILYHALCCDDDEDEDEDEDGRDEEEDKLDTDSERSPLAGSPVPPLPELYNCREPPAGGSHTIPRKDALNPGCRKKLLRNSSTQTVSDKSTQTLLPYVPAKHRNKDL.

Residues 1 to 22 are disordered; that stretch reads MSQSRAPAREPSETPSQREQIR. The stretch at 25 to 58 forms a coiled coil; sequence MKMVIQQLEGILKELKDVAHELREVVGQIDKLTS. Disordered regions lie at residues 113-174 and 189-287; these read RRSA…GTRE and CDDD…NKDL. Low complexity predominate over residues 153–167; it reads EEASSSTHSQSQKTS. The segment covering 189–209 has biased composition (acidic residues); that stretch reads CDDDEDEDEDEDGRDEEEDKL. Over residues 259 to 274 the composition is skewed to polar residues; that stretch reads RNSSTQTVSDKSTQTL.

This sequence belongs to the INSYN1 family.

It localises to the postsynaptic density. Its function is as follows. May be a component of the protein machinery at the inhibitory synapses, probably acting as a scaffold. The sequence is that of Inhibitory synaptic factor 1 from Danio rerio (Zebrafish).